Reading from the N-terminus, the 428-residue chain is Histidinol dehydrogenase (428 aa).

Positions 129, 188, and 211 each coordinate NAD(+). The substrate site is built by serine 234, glutamine 256, and histidine 259. Zn(2+)-binding residues include glutamine 256 and histidine 259. Residues glutamate 323 and histidine 324 each act as proton acceptor in the active site. Histidine 324, aspartate 357, glutamate 411, and histidine 416 together coordinate substrate. Zn(2+) is bound at residue aspartate 357. Zn(2+) is bound at residue histidine 416.

Belongs to the histidinol dehydrogenase family. The cofactor is Zn(2+).

It catalyses the reaction L-histidinol + 2 NAD(+) + H2O = L-histidine + 2 NADH + 3 H(+). The protein operates within amino-acid biosynthesis; L-histidine biosynthesis; L-histidine from 5-phospho-alpha-D-ribose 1-diphosphate: step 9/9. Functionally, catalyzes the sequential NAD-dependent oxidations of L-histidinol to L-histidinaldehyde and then to L-histidine. The chain is Histidinol dehydrogenase from Caulobacter vibrioides (strain ATCC 19089 / CIP 103742 / CB 15) (Caulobacter crescentus).